The primary structure comprises 210 residues: Thymidylate kinase (210 aa).

ATP is bound at residue 11-18 (GLEGAGKS).

The protein belongs to the thymidylate kinase family.

It carries out the reaction dTMP + ATP = dTDP + ADP. In terms of biological role, phosphorylation of dTMP to form dTDP in both de novo and salvage pathways of dTTP synthesis. This chain is Thymidylate kinase, found in Vibrio campbellii (strain ATCC BAA-1116).